The sequence spans 287 residues: Large ribosomal subunit protein uL2 (287 aa).

Residues 221–287 are disordered; the sequence is RGSVMNPCDH…SKRSRGGRDS (67 aa). Over residues 258–287 the composition is skewed to basic residues; the sequence is KTRKKNKPSNKLVVRRRRRVSKRSRGGRDS.

The protein belongs to the universal ribosomal protein uL2 family. As to quaternary structure, part of the 50S ribosomal subunit. Forms a bridge to the 30S subunit in the 70S ribosome.

Its function is as follows. One of the primary rRNA binding proteins. Required for association of the 30S and 50S subunits to form the 70S ribosome, for tRNA binding and peptide bond formation. It has been suggested to have peptidyltransferase activity; this is somewhat controversial. Makes several contacts with the 16S rRNA in the 70S ribosome. The protein is Large ribosomal subunit protein uL2 of Prochlorococcus marinus (strain AS9601).